Consider the following 176-residue polypeptide: Dual-action ribosomal maturation protein DarP (176 aa).

The protein belongs to the DarP family.

It is found in the cytoplasm. Its function is as follows. Member of a network of 50S ribosomal subunit biogenesis factors which assembles along the 30S-50S interface, preventing incorrect 23S rRNA structures from forming. Promotes peptidyl transferase center (PTC) maturation. The sequence is that of Dual-action ribosomal maturation protein DarP from Actinobacillus pleuropneumoniae serotype 5b (strain L20).